Consider the following 261-residue polypeptide: DNA repair protein RecO (261 aa).

It belongs to the RecO family.

Functionally, involved in DNA repair and RecF pathway recombination. The chain is DNA repair protein RecO from Chlorobium phaeobacteroides (strain DSM 266 / SMG 266 / 2430).